We begin with the raw amino-acid sequence, 75 residues long: Small ribosomal subunit protein bS18 (75 aa).

This sequence belongs to the bacterial ribosomal protein bS18 family. As to quaternary structure, part of the 30S ribosomal subunit. Forms a tight heterodimer with protein bS6.

Its function is as follows. Binds as a heterodimer with protein bS6 to the central domain of the 16S rRNA, where it helps stabilize the platform of the 30S subunit. The polypeptide is Small ribosomal subunit protein bS18 (Aliivibrio fischeri (strain ATCC 700601 / ES114) (Vibrio fischeri)).